The chain runs to 395 residues: Tyrosine--tRNA ligase (395 aa).

The 'HIGH' region motif lies at 42 to 51; that stretch reads PTAPDIHLGH. The 'KMSKS' region signature appears at 226–230; it reads KMSKS. Lys229 contributes to the ATP binding site. The region spanning 334–394 is the S4 RNA-binding domain; it reads IAISNLLKDA…GKRKFARITL (61 aa).

The protein belongs to the class-I aminoacyl-tRNA synthetase family. TyrS type 2 subfamily. As to quaternary structure, homodimer.

The protein resides in the cytoplasm. It catalyses the reaction tRNA(Tyr) + L-tyrosine + ATP = L-tyrosyl-tRNA(Tyr) + AMP + diphosphate + H(+). Catalyzes the attachment of tyrosine to tRNA(Tyr) in a two-step reaction: tyrosine is first activated by ATP to form Tyr-AMP and then transferred to the acceptor end of tRNA(Tyr). In Photobacterium profundum (strain SS9), this protein is Tyrosine--tRNA ligase.